The primary structure comprises 118 residues: Small ribosomal subunit protein uS13 (118 aa).

Residues 91 to 118 (HRRGLPVRGQRTKTNARTRKGPRKPIKK) form a disordered region.

It belongs to the universal ribosomal protein uS13 family. As to quaternary structure, part of the 30S ribosomal subunit. Forms a loose heterodimer with protein S19. Forms two bridges to the 50S subunit in the 70S ribosome.

Located at the top of the head of the 30S subunit, it contacts several helices of the 16S rRNA. In the 70S ribosome it contacts the 23S rRNA (bridge B1a) and protein L5 of the 50S subunit (bridge B1b), connecting the 2 subunits; these bridges are implicated in subunit movement. Contacts the tRNAs in the A and P-sites. This Serratia proteamaculans (strain 568) protein is Small ribosomal subunit protein uS13.